The primary structure comprises 337 residues: Adenylosuccinate synthetase (337 aa).

GTP-binding positions include 12–18 and 42–44; these read GDEGKGK and GHT. Residue D13 is the Proton acceptor of the active site. Residues D13 and G42 each contribute to the Mg(2+) site. IMP-binding positions include 13-16, 40-43, T127, R141, Q179, T194, and R256; these read DEGK and NAGH. The Proton donor role is filled by H43. 252–258 is a binding site for substrate; that stretch reads TVTGRRR. GTP is bound by residues R258, 284-286, and 324-326; these read CLD and STG.

It belongs to the adenylosuccinate synthetase family. In terms of assembly, homodimer. Mg(2+) is required as a cofactor.

Its subcellular location is the cytoplasm. It catalyses the reaction IMP + L-aspartate + GTP = N(6)-(1,2-dicarboxyethyl)-AMP + GDP + phosphate + 2 H(+). Its pathway is purine metabolism; AMP biosynthesis via de novo pathway; AMP from IMP: step 1/2. Its function is as follows. Plays an important role in the de novo pathway of purine nucleotide biosynthesis. Catalyzes the first committed step in the biosynthesis of AMP from IMP. The polypeptide is Adenylosuccinate synthetase (Methanococcus maripaludis (strain C6 / ATCC BAA-1332)).